We begin with the raw amino-acid sequence, 305 residues long: Sulfate adenylyltransferase subunit 2 (305 aa).

Belongs to the PAPS reductase family. CysD subfamily. Heterodimer composed of CysD, the smaller subunit, and CysN.

The catalysed reaction is sulfate + ATP + H(+) = adenosine 5'-phosphosulfate + diphosphate. The protein operates within sulfur metabolism; hydrogen sulfide biosynthesis; sulfite from sulfate: step 1/3. Functionally, with CysN forms the ATP sulfurylase (ATPS) that catalyzes the adenylation of sulfate producing adenosine 5'-phosphosulfate (APS) and diphosphate, the first enzymatic step in sulfur assimilation pathway. APS synthesis involves the formation of a high-energy phosphoric-sulfuric acid anhydride bond driven by GTP hydrolysis by CysN coupled to ATP hydrolysis by CysD. The chain is Sulfate adenylyltransferase subunit 2 from Pseudomonas putida (strain ATCC 700007 / DSM 6899 / JCM 31910 / BCRC 17059 / LMG 24140 / F1).